Here is a 236-residue protein sequence, read N- to C-terminus: Aquaporin Z (236 aa).

The next 2 membrane-spanning stretches (helical) occupy residues 12–32 (FFGTFWLVLGGCGSAVLAAGV) and 37–57 (IGYAGVALAFGLTVLTMAYAV). The short motif at 66–68 (NPA) is the NPA 1 element. 3 helical membrane passes run 92–112 (VVGAIVAAATLASIAQGVAGF), 136–156 (AALICEIVLSAGFVFVILGAT), and 163–183 (GFAPIPIGLALTLIHLISIPV). Residues 189–191 (NPA) carry the NPA 2 motif. Residues 197–217 (ALFVGGWALEQLWLFWLAPIA) traverse the membrane as a helical segment.

Belongs to the MIP/aquaporin (TC 1.A.8) family. Homotetramer.

It is found in the cell inner membrane. The enzyme catalyses H2O(in) = H2O(out). Channel that permits osmotically driven movement of water in both directions. It is involved in the osmoregulation and in the maintenance of cell turgor during volume expansion in rapidly growing cells. It mediates rapid entry or exit of water in response to abrupt changes in osmolarity. This chain is Aquaporin Z, found in Bordetella bronchiseptica (strain ATCC BAA-588 / NCTC 13252 / RB50) (Alcaligenes bronchisepticus).